The primary structure comprises 333 residues: Serine/threonine-protein phosphatase PP1-beta (333 aa).

Positions 63, 65, 91, and 123 each coordinate Mn(2+). The active-site Proton donor is His-124. Mn(2+) is bound by residues His-172 and His-247. Residues 306 to 333 (GAGGVGSNRPVTPPRNAPAAQPKKGAKK) are disordered. The segment covering 322-333 (APAAQPKKGAKK) has biased composition (low complexity).

Belongs to the PPP phosphatase family. PP-1 subfamily. In terms of assembly, interacts with lab-1; the interaction is direct. Interacts with knl-1; the interaction is direct. Mn(2+) is required as a cofactor.

The protein resides in the cytoplasm. Its subcellular location is the nucleus. It carries out the reaction O-phospho-L-seryl-[protein] + H2O = L-seryl-[protein] + phosphate. It catalyses the reaction O-phospho-L-threonyl-[protein] + H2O = L-threonyl-[protein] + phosphate. Serine/threonine-protein phosphatase essential for chromosomal dynamics during meiosis and mitosis. Antagonizes the function of air-2 in the regulation of chromosome cohesion. Dephosphorylates histone H3 at 'Ser-10'. Also involved in the activation of chloride channel clh-3 during cell swelling and meiotic maturation. Essential for embryogenesis. The chain is Serine/threonine-protein phosphatase PP1-beta (gsp-2) from Caenorhabditis briggsae.